We begin with the raw amino-acid sequence, 156 residues long: Arginine repressor (156 aa).

The protein belongs to the ArgR family.

The protein localises to the cytoplasm. Its pathway is amino-acid biosynthesis; L-arginine biosynthesis [regulation]. In terms of biological role, regulates arginine biosynthesis genes. The sequence is that of Arginine repressor from Shewanella sp. (strain ANA-3).